The following is a 232-amino-acid chain: Ribose-5-phosphate isomerase A (232 aa).

Residues 28-31, 83-86, and 96-99 each bind substrate; these read TGST, DGAD, and KGGG. Glutamate 105 acts as the Proton acceptor in catalysis. Position 123 (lysine 123) interacts with substrate.

It belongs to the ribose 5-phosphate isomerase family. Homodimer.

It carries out the reaction aldehydo-D-ribose 5-phosphate = D-ribulose 5-phosphate. It participates in carbohydrate degradation; pentose phosphate pathway; D-ribose 5-phosphate from D-ribulose 5-phosphate (non-oxidative stage): step 1/1. Functionally, catalyzes the reversible conversion of ribose-5-phosphate to ribulose 5-phosphate. This is Ribose-5-phosphate isomerase A from Rhizobium etli (strain CIAT 652).